Here is a 360-residue protein sequence, read N- to C-terminus: Peptide chain release factor 1 (360 aa).

The residue at position 237 (glutamine 237) is an N5-methylglutamine.

This sequence belongs to the prokaryotic/mitochondrial release factor family. Post-translationally, methylated by PrmC. Methylation increases the termination efficiency of RF1.

The protein resides in the cytoplasm. Peptide chain release factor 1 directs the termination of translation in response to the peptide chain termination codons UAG and UAA. In Pseudomonas putida (strain ATCC 47054 / DSM 6125 / CFBP 8728 / NCIMB 11950 / KT2440), this protein is Peptide chain release factor 1.